The sequence spans 336 residues: Dihydroorotate dehydrogenase (quinone) (336 aa).

Residues 62–66 (AGLDK) and Thr86 contribute to the FMN site. Position 66 (Lys66) interacts with substrate. A substrate-binding site is contributed by 111–115 (NRMGF). FMN-binding residues include Asn139 and Asn172. Substrate is bound at residue Asn172. The active-site Nucleophile is the Ser175. Residue Asn177 coordinates substrate. FMN-binding residues include Lys217 and Thr245. 246–247 (NT) contacts substrate. FMN contacts are provided by residues Gly268, Gly297, and 318 to 319 (YS).

The protein belongs to the dihydroorotate dehydrogenase family. Type 2 subfamily. As to quaternary structure, monomer. Requires FMN as cofactor.

Its subcellular location is the cell membrane. The catalysed reaction is (S)-dihydroorotate + a quinone = orotate + a quinol. It functions in the pathway pyrimidine metabolism; UMP biosynthesis via de novo pathway; orotate from (S)-dihydroorotate (quinone route): step 1/1. In terms of biological role, catalyzes the conversion of dihydroorotate to orotate with quinone as electron acceptor. The sequence is that of Dihydroorotate dehydrogenase (quinone) from Vibrio vulnificus (strain YJ016).